Here is an 85-residue protein sequence, read N- to C-terminus: Phosphocarrier protein HPr (85 aa).

One can recognise an HPr domain in the interval 1 to 85; it reads MFQQEVTITA…HLVKLMAELE (85 aa). Histidine 15 (pros-phosphohistidine intermediate) is an active-site residue.

Its subcellular location is the cytoplasm. Its function is as follows. General (non sugar-specific) component of the phosphoenolpyruvate-dependent sugar phosphotransferase system (sugar PTS). This major carbohydrate active-transport system catalyzes the phosphorylation of incoming sugar substrates concomitantly with their translocation across the cell membrane. The phosphoryl group from phosphoenolpyruvate (PEP) is transferred to the phosphoryl carrier protein HPr by enzyme I. Phospho-HPr then transfers it to the PTS EIIA domain. This chain is Phosphocarrier protein HPr (ptsH), found in Klebsiella pneumoniae.